Reading from the N-terminus, the 715-residue chain is ATP-dependent DNA helicase Hel308 (715 aa).

Residues methionine 1 to alanine 29 carry the Q motif motif. ATP is bound by residues glutamine 28 and isoleucine 46 to threonine 53. The region spanning threonine 33 to aspartate 197 is the Helicase ATP-binding domain. A DEAH box motif is present at residues aspartate 145 to histidine 148. Residues tryptophan 226–isoleucine 422 form the Helicase C-terminal domain.

It belongs to the helicase family. Hel308 subfamily. As to quaternary structure, monomer.

The catalysed reaction is Couples ATP hydrolysis with the unwinding of duplex DNA by translocating in the 3'-5' direction.. It carries out the reaction ATP + H2O = ADP + phosphate + H(+). In terms of biological role, DNA-dependent ATPase and 3'-5' DNA helicase that may be involved in repair of stalled replication forks. Its function is as follows. Rapidly unwinds double-stranded (ds)DNA with a 3'-overhang, has no strand reannealing capabilities. Binds single-stranded (ss)DNA, dsDNA with a 3'-overhang and ssRNA. The protein is ATP-dependent DNA helicase Hel308 of Pyrococcus abyssi (strain GE5 / Orsay).